The sequence spans 76 residues: Small ribosomal subunit protein bS18 (76 aa).

Belongs to the bacterial ribosomal protein bS18 family. Part of the 30S ribosomal subunit. Forms a tight heterodimer with protein bS6.

In terms of biological role, binds as a heterodimer with protein bS6 to the central domain of the 16S rRNA, where it helps stabilize the platform of the 30S subunit. This Azotobacter vinelandii (strain DJ / ATCC BAA-1303) protein is Small ribosomal subunit protein bS18.